Reading from the N-terminus, the 314-residue chain is Curved DNA-binding protein (314 aa).

Residues 5-69 (DYYKILDVEP…EKRAEYDELR (65 aa)) enclose the J domain. A disordered region spans residues 73–92 (RQGRPFQTPPGWQSRAGAGA).

It localises to the cytoplasm. It is found in the nucleoid. In terms of biological role, DNA-binding protein that preferentially recognizes a curved DNA sequence. It is probably a functional analog of DnaJ; displays overlapping activities with DnaJ, but functions under different conditions, probably acting as a molecular chaperone in an adaptive response to environmental stresses other than heat shock. Lacks autonomous chaperone activity; binds native substrates and targets them for recognition by DnaK. Its activity is inhibited by the binding of CbpM. This Pseudomonas syringae pv. tomato (strain ATCC BAA-871 / DC3000) protein is Curved DNA-binding protein.